A 33-amino-acid polypeptide reads, in one-letter code: Cytochrome b6-f complex subunit 7 (33 aa).

Residues 9–29 traverse the membrane as a helical segment; sequence AVICFTLTLIGLSLGFVLLKI.

The protein belongs to the PetM family. The 4 large subunits of the cytochrome b6-f complex are cytochrome b6, subunit IV (17 kDa polypeptide, PetD), cytochrome f and the Rieske protein, while the 4 small subunits are PetG, PetL, PetM and PetN. The complex functions as a dimer.

Its subcellular location is the plastid. The protein localises to the cyanelle thylakoid membrane. Its function is as follows. Component of the cytochrome b6-f complex, which mediates electron transfer between photosystem II (PSII) and photosystem I (PSI), cyclic electron flow around PSI, and state transitions. This Cyanophora paradoxa protein is Cytochrome b6-f complex subunit 7.